A 407-amino-acid polypeptide reads, in one-letter code: UDP-N-acetylglucosamine--N-acetylmuramyl-(pentapeptide) pyrophosphoryl-undecaprenol N-acetylglucosamine transferase (407 aa).

A disordered region spans residues 1–21 (MNNSVREPTRGRRGSPPVADA). UDP-N-acetyl-alpha-D-glucosamine contacts are provided by residues 38–40 (TAG), N157, S228, and Q324.

Belongs to the glycosyltransferase 28 family. MurG subfamily.

It is found in the cell membrane. It carries out the reaction di-trans,octa-cis-undecaprenyl diphospho-N-acetyl-alpha-D-muramoyl-L-alanyl-D-glutamyl-meso-2,6-diaminopimeloyl-D-alanyl-D-alanine + UDP-N-acetyl-alpha-D-glucosamine = di-trans,octa-cis-undecaprenyl diphospho-[N-acetyl-alpha-D-glucosaminyl-(1-&gt;4)]-N-acetyl-alpha-D-muramoyl-L-alanyl-D-glutamyl-meso-2,6-diaminopimeloyl-D-alanyl-D-alanine + UDP + H(+). Its pathway is cell wall biogenesis; peptidoglycan biosynthesis. In terms of biological role, cell wall formation. Catalyzes the transfer of a GlcNAc subunit on undecaprenyl-pyrophosphoryl-MurNAc-pentapeptide (lipid intermediate I) to form undecaprenyl-pyrophosphoryl-MurNAc-(pentapeptide)GlcNAc (lipid intermediate II). The polypeptide is UDP-N-acetylglucosamine--N-acetylmuramyl-(pentapeptide) pyrophosphoryl-undecaprenol N-acetylglucosamine transferase (Mycobacterium leprae (strain TN)).